The chain runs to 204 residues: MSFDNYLVPTVIEQSGRGERAFDIYSRLLKERIVFLVGPVTDESANLVVAQLLFLESENPDKDIFFYINSPGGSVTAGMSIYDTMNFIKPDVSTLCLGQAASMGAFLLSAGEKGKRFALPNSRIMIHQPLISGGLGGQASDIEIHARELLKIKEKLNRLMAKHCGRDLADLERDTDRDNFMSAEEAKEYGLIDQILENRASLQF.

S102 (nucleophile) is an active-site residue. The active site involves H127.

The protein belongs to the peptidase S14 family. Fourteen ClpP subunits assemble into 2 heptameric rings which stack back to back to give a disk-like structure with a central cavity, resembling the structure of eukaryotic proteasomes.

Its subcellular location is the cytoplasm. It carries out the reaction Hydrolysis of proteins to small peptides in the presence of ATP and magnesium. alpha-casein is the usual test substrate. In the absence of ATP, only oligopeptides shorter than five residues are hydrolyzed (such as succinyl-Leu-Tyr-|-NHMec, and Leu-Tyr-Leu-|-Tyr-Trp, in which cleavage of the -Tyr-|-Leu- and -Tyr-|-Trp bonds also occurs).. In terms of biological role, cleaves peptides in various proteins in a process that requires ATP hydrolysis. Has a chymotrypsin-like activity. Plays a major role in the degradation of misfolded proteins. This Neisseria meningitidis serogroup C (strain 053442) protein is ATP-dependent Clp protease proteolytic subunit.